Consider the following 2592-residue polypeptide: 6-hydroxymellein synthase cdmE (2592 aa).

Basic and acidic residues predominate over residues 1–11; it reads MVLHPSDRRFP. The interval 1-25 is disordered; it reads MVLHPSDRRFPETNGVGGHSKDSSA. In terms of domain architecture, Ketosynthase family 3 (KS3) spans 32-456; it reads LEPLAIVGFA…GTNAHVVLES (425 aa). Active-site for beta-ketoacyl synthase activity residues include Cys205, His340, and His379. The segment at 589–910 is malonyl-CoA:ACP transacylase (MAT) domain; sequence VFTGQGAQWP…RYSHTITRKK (322 aa). The interval 978–1113 is N-terminal hotdog fold; the sequence is HELLGSPDPD…GFIESKCESD (136 aa). The tract at residues 978–1291 is dehydratase (DH) domain; the sequence is HELLGSPDPD…IRGTELCLLS (314 aa). One can recognise a PKS/mFAS DH domain in the interval 978–1296; sequence HELLGSPDPD…LCLLSAGRGD (319 aa). The segment at 1140–1296 is C-terminal hotdog fold; that stretch reads TQIGSISAFY…LCLLSAGRGD (157 aa). 2 residues coordinate S-adenosyl-L-methionine: Ile1462 and Glu1484. Positions 1483-1591 are methyltransferase (CMeT) domain; it reads LEIGTGFGSV…HSLLKPGGKL (109 aa). The enoyl reductase (ER) domain stretch occupies residues 1887–2199; sequence GLLVWSDDEA…NDSNMDTAVI (313 aa). Residues 2223–2398 form a ketoreductase (KR) domain region; it reads ATYVIAGGLG…IPGMSVNLGN (176 aa). The 78-residue stretch at 2509 to 2586 folds into the Carrier domain; it reads VAASHVTEAI…GLSEKIARQS (78 aa). The residue at position 2546 (Ser2546) is an O-(pantetheine 4'-phosphoryl)serine.

It carries out the reaction 5 malonyl-CoA + AH2 + 5 H(+) = 6-hydroxymellein + A + 5 CO2 + 5 CoA + H2O. It participates in secondary metabolite biosynthesis; terpenoid biosynthesis. Functionally, highly reducing polyketide synthase; part of the gene cluster that mediates the biosynthesis of chrodrimanin B, a meroterpenoid that acts as a potent blocker of insect GABA-gated chloride channels. The first step of the pathway is the biosynthesis of 6-hydroxymellein by the polyketide synthase cdmE. The prenyltransferase cdmH acts as a 6-hydroxymellein 5-farnesyltransferase and produces the hydrophobic metabolite verruculide C. The FAD-dependent monooxygenase cdmI further converts verruculide C into verruculide B. The terpene cyclase cdmG then produced the pentacyclic molecule 3-hydroxypentacecilide A, the backbone structure of chrodrimanin B, via folding the farnesyl moiety of the substrate into the chair-boat conformation. The short-chain dehydrogenase/reductase cdmF functions as the 3-OH dehydrogenase that oxidizes the C-3 hydroxyl group of 3-hydroxypentacecilide A and produces chrodrimanin C, the dehydrogenated product of 3-hydroxypentacecilide A. The cytochrome P450 monooxygenase cdmJ then accepts both 3-hydroxypentacecilide A and chrodrimanin C and functions as a C-7-beta-hydroxylase to produce respectively chrodrimanin H and chrodrimanin F. The dioxygenase cdmA accepts chrodrimanin H to afford chrodrimanin E, which is further transformed to chrodrimanin A by the dioxygenase cdmD. CdmA can also accept chrodrimanin C as substrate to convert it into verruculide A, which is further converted into chrodrimanin T by cdmD. The last step of the biosynthesis is proposed to be performed by the acetyltransferase cdmC which acetylates chrodrimanin A to yield chrodrimanin B. The pathway may also lead to the production of additional shunt products, including chrodrimanins T and U. This chain is 6-hydroxymellein synthase cdmE, found in Talaromyces verruculosus (Penicillium verruculosum).